The primary structure comprises 196 residues: MTRFILASGSQIRADILRQAHIPFEIIKSDVDESVIKAERADLSPRDMALCLAEAKVEPVSLAHPDALVLGADQTMELDGELLDKLPQASLARARLERMRGRPHFLHSGLALLRAGQPVWRYQQTSTIHVRGFSDAFLDQYLENAGFALTASVGAYAYEGLGSQLFERVEGDYYAILGLPLLPLTAVLRDHGVLQQ.

The active-site Proton acceptor is the Asp-73.

The protein belongs to the Maf family. Requires a divalent metal cation as cofactor.

It localises to the cytoplasm. It carries out the reaction a ribonucleoside 5'-triphosphate + H2O = a ribonucleoside 5'-phosphate + diphosphate + H(+). The enzyme catalyses a 2'-deoxyribonucleoside 5'-triphosphate + H2O = a 2'-deoxyribonucleoside 5'-phosphate + diphosphate + H(+). Its function is as follows. Nucleoside triphosphate pyrophosphatase. May have a dual role in cell division arrest and in preventing the incorporation of modified nucleotides into cellular nucleic acids. This is Nucleoside triphosphate pyrophosphatase from Maricaulis maris (strain MCS10) (Caulobacter maris).